Reading from the N-terminus, the 427-residue chain is Serine--tRNA ligase (427 aa).

Thr-236–Glu-238 serves as a coordination point for L-serine. An ATP-binding site is contributed by Arg-267 to Glu-269. Glu-290 provides a ligand contact to L-serine. Glu-354 to Ser-357 contributes to the ATP binding site. Position 390 (Ser-390) interacts with L-serine.

The protein belongs to the class-II aminoacyl-tRNA synthetase family. Type-1 seryl-tRNA synthetase subfamily. As to quaternary structure, homodimer. The tRNA molecule binds across the dimer.

It is found in the cytoplasm. The enzyme catalyses tRNA(Ser) + L-serine + ATP = L-seryl-tRNA(Ser) + AMP + diphosphate + H(+). The catalysed reaction is tRNA(Sec) + L-serine + ATP = L-seryl-tRNA(Sec) + AMP + diphosphate + H(+). The protein operates within aminoacyl-tRNA biosynthesis; selenocysteinyl-tRNA(Sec) biosynthesis; L-seryl-tRNA(Sec) from L-serine and tRNA(Sec): step 1/1. Functionally, catalyzes the attachment of serine to tRNA(Ser). Is also able to aminoacylate tRNA(Sec) with serine, to form the misacylated tRNA L-seryl-tRNA(Sec), which will be further converted into selenocysteinyl-tRNA(Sec). The sequence is that of Serine--tRNA ligase from Picosynechococcus sp. (strain ATCC 27264 / PCC 7002 / PR-6) (Agmenellum quadruplicatum).